The chain runs to 304 residues: MSASTAAPARDRLRIAIQKSGRLAEPARSLLAACGLSWRQSRDKLFCYGESLPVDLLLVRDDDIPGLIADGVCDLGIVGQNELEEQAAERRRNGLPAAYHAVRGVGFGQCRLMLAVPEEWDWHGVGQLAGKRIATSYPAILADWLERQGIDATVVELSGSVEIAPRLGTADLICDLVSSGATLAANQLKPVELVMESEAVLAGAVREPADARAGLLAMLLRRMDGVLKLRDSKLLMFRAEQTNVDALRRLLPDADPLVQLPDDGNGALRLQTMCHGAVTWQRLEELERAGAQGLMVLTVERSLA.

This sequence belongs to the ATP phosphoribosyltransferase family. Long subfamily. Requires Mg(2+) as cofactor.

It is found in the cytoplasm. The enzyme catalyses 1-(5-phospho-beta-D-ribosyl)-ATP + diphosphate = 5-phospho-alpha-D-ribose 1-diphosphate + ATP. It participates in amino-acid biosynthesis; L-histidine biosynthesis; L-histidine from 5-phospho-alpha-D-ribose 1-diphosphate: step 1/9. Its activity is regulated as follows. Feedback inhibited by histidine. Catalyzes the condensation of ATP and 5-phosphoribose 1-diphosphate to form N'-(5'-phosphoribosyl)-ATP (PR-ATP). Has a crucial role in the pathway because the rate of histidine biosynthesis seems to be controlled primarily by regulation of HisG enzymatic activity. This chain is ATP phosphoribosyltransferase, found in Xanthomonas euvesicatoria pv. vesicatoria (strain 85-10) (Xanthomonas campestris pv. vesicatoria).